Consider the following 97-residue polypeptide: Small ribosomal subunit protein bS6 (97 aa).

Belongs to the bacterial ribosomal protein bS6 family.

Functionally, binds together with bS18 to 16S ribosomal RNA. This is Small ribosomal subunit protein bS6 from Dictyoglomus turgidum (strain DSM 6724 / Z-1310).